A 50-amino-acid chain; its full sequence is MPRDGFTLFCTDCKMENYISKKNKKNTPEKVELKKFCAKCNASTLHKEKK.

It belongs to the bacterial ribosomal protein bL33 family.

This Mycoplasmopsis agalactiae (strain NCTC 10123 / CIP 59.7 / PG2) (Mycoplasma agalactiae) protein is Large ribosomal subunit protein bL33B.